The chain runs to 1070 residues: Error-prone DNA polymerase (1070 aa).

The protein belongs to the DNA polymerase type-C family. DnaE2 subfamily.

The protein localises to the cytoplasm. It carries out the reaction DNA(n) + a 2'-deoxyribonucleoside 5'-triphosphate = DNA(n+1) + diphosphate. Its function is as follows. DNA polymerase involved in damage-induced mutagenesis and translesion synthesis (TLS). It is not the major replicative DNA polymerase. This Aromatoleum aromaticum (strain DSM 19018 / LMG 30748 / EbN1) (Azoarcus sp. (strain EbN1)) protein is Error-prone DNA polymerase.